A 278-amino-acid chain; its full sequence is Undecaprenyl-diphosphatase (278 aa).

A run of 6 helical transmembrane segments spans residues 49–69 (ANTF…VVFW), 97–117 (HVLI…DFID), 120–140 (LFSI…MIAA), 197–217 (ADFT…LSLV), 226–246 (GDLG…LLSI), and 258–278 (LVPF…IVYM).

This sequence belongs to the UppP family.

It is found in the cell membrane. It catalyses the reaction di-trans,octa-cis-undecaprenyl diphosphate + H2O = di-trans,octa-cis-undecaprenyl phosphate + phosphate + H(+). Its function is as follows. Catalyzes the dephosphorylation of undecaprenyl diphosphate (UPP). Confers resistance to bacitracin. The polypeptide is Undecaprenyl-diphosphatase (Exiguobacterium sibiricum (strain DSM 17290 / CCUG 55495 / CIP 109462 / JCM 13490 / 255-15)).